The chain runs to 190 residues: Dynein axonemal light chain 1 (190 aa).

N-acetylalanine is present on Ala-2. LRR repeat units lie at residues 49-70 (NCEKLSLSTNCIEKIANLNGLK), 71-92 (NLRILSLGRNNIKNLNGLEAVG), 94-115 (TLEELWISYNFIEKLKGIHIMK), and 116-137 (KLKILYMSNNLVKDWAEFVKLA). At Ser-56 the chain carries Phosphoserine. Residues 150–190 (NPLEEKHSAENNWIEEATKRVPKLKKLDGTPVIKGDEEEDN) form the LRRCT domain.

Belongs to the dynein light chain LC1-type family. Interacts with ZMYND10 (via C-terminus). Interacts with DNAH5, a outer arm dynein heavy chain. Interacts with tubulin located within the A-tubule of the outer doublets in a ATP-independent manner. As to expression, expressed in tissues carrying motile cilia such as respiratory epithelia, ependyma and testis.

The protein resides in the cytoplasm. It localises to the cytoskeleton. Its subcellular location is the cilium axoneme. Functionally, part of the multisubunit axonemal ATPase complexes that generate the force for cilia motility and govern beat frequency. Component of the outer arm dynein (ODA). May be involved in a mechanosensory feedback mechanism controlling ODA activity based on external conformational cues by tethering the outer arm dynein heavy chain (DNAH5) to the microtubule within the axoneme. Important for ciliary function in the airways and for the function of the cilia that produce the nodal flow essential for the determination of the left-right asymmetry. The polypeptide is Dynein axonemal light chain 1 (Homo sapiens (Human)).